A 317-amino-acid chain; its full sequence is Succinate receptor 1 (317 aa).

Over 1–23 (MAQNLSCENWLATEAILNKYYLS) the chain is Extracellular. N-linked (GlcNAc...) asparagine glycosylation occurs at Asn-4. A helical membrane pass occupies residues 24-47 (AFYAIEFIFGLLGNVTVVFGYLFC). Topologically, residues 48 to 55 (MKNWNSSN) are cytoplasmic. A helical transmembrane segment spans residues 56–76 (VYLFNLSISDFAFLCTLPILI). The Extracellular portion of the chain corresponds to 77–101 (KSYANDKGTYGDVLCISNRYVLHTN). The cysteines at positions 91 and 168 are disulfide-linked. The helical transmembrane segment at 102–119 (LYTSILFLTFISMDRYLL) threads the bilayer. Residues 120–133 (MKYPFREHFLQKKE) are Cytoplasmic-facing. Residues 134–157 (FAILISLAVWALVTLEVLPMLTFI) traverse the membrane as a helical segment. Residues 158–180 (NSVPKEEGSNCIDYASSGNPEHN) lie on the Extracellular side of the membrane. Residues 181-204 (LIYSLCLTLLGFLIPLSVMCFFYY) form a helical membrane-spanning segment. Residues 205–228 (KMVVFLKRRSQQQATALPLDKPQR) are Cytoplasmic-facing. A helical membrane pass occupies residues 229 to 246 (LVVLAVVIFSILFTPYHI). At 247–277 (MRNLRIASRLDSWPQGCTQKAIKSIYTLTRP) the chain is on the extracellular side. Residues 278–294 (LAFLNSAINPIFYFLMG) traverse the membrane as a helical segment. Residues 295–317 (DHYREMLISKFRQYFKSLTSFRT) lie on the Cytoplasmic side of the membrane.

Belongs to the G-protein coupled receptor 1 family. Predominantly expressed in the kidney (proximal and distal tubules and the juxtaglomerular apparatus). Weakly expressed in liver, spleen and small intestine. Highly expressed in immature dendritic cells, expression rapidly downregulates after maturation. Also expressed in macrophages. Specifically expressed in intestinal tuft cells. Expression in whole muscle is attributable to major non-myofibrillar resident cell types, including stromal, endothelial and satellite cell populations.

The protein localises to the cell membrane. G protein-coupled receptor for succinate able to mediate signaling through Gq/GNAQ or Gi/GNAI second messengers depending on the cell type and the processes regulated. Succinate-SUCNR1 signaling serves as a link between metabolic stress, inflammation and energy homeostasis. In macrophages, plays a range of immune-regulatory roles. During inflammation, succinate-SUCNR1 signaling may act as an anti-inflammatory mediator or boost inflammation depending on the inflammatory status of cells. Hyperpolarizes M2 macrophages versus M1 phenotype through Gq signaling by regulating the transcription of genes involved in immune function. In activated M1 macrophages, plays a pro-inflammatory role in response to LPS. Expressed in dendritic cells, where it is involved in the sensing of immunological danger and enhances immunity. Mediates succinate triggered intracelleular calcium mobilization, induces migratory responses and acts in synergy with Toll-like receptor ligands for the production of proinflammatory cytokines as well as an enhancement of antigen-specific activation of helper T cells. In the small intestine, mediates the activation of tuft cells by dietary succinate and triggers type 2 immunity. In adipocytes, plays an important role in the control of energy metabolism. In response to succinate, controls leptin expression in an AMPK-JNK-CEBPA-dependent as well as circadian clock-regulated manner. In muscle tissue, is expressed in non-muscle cells and coordinates muscle remodeling in response to the succinate produced during exercise training in a paracrine manner. In retina, acts as a mediator of vessel growth during retinal development. In response to succinate, regulates the production of angiogenic factors, including VEGF, by retinal ganglion neurons. The sequence is that of Succinate receptor 1 (Sucnr1) from Mus musculus (Mouse).